Here is a 284-residue protein sequence, read N- to C-terminus: Serine protease 57 (284 aa).

Positions 1–35 are cleaved as a signal peptide; the sequence is MPSSTAMVPGTRGGWHCLVLTTAAALTQLMWLPGC. Residues 40–269 enclose the Peptidase S1 domain; the sequence is IVGGHEVTPH…FVTWIWDVVR (230 aa). Cys-65 and Cys-81 form a disulfide bridge. Residues His-80 and Asp-128 each act as charge relay system in the active site. The N-linked (GlcNAc...) asparagine glycan is linked to Asn-135. 3 disulfides stabilise this stretch: Cys-163/Cys-230, Cys-194/Cys-208, and Cys-220/Cys-245. Catalysis depends on Ser-224, which acts as the Charge relay system.

This sequence belongs to the peptidase S1 family. Post-translationally, after cleavage of the signal peptide, the N-terminus is probably further processed by CTSC. Processing by CTSC is probably required for accumulation in cytoplasmic granules; in the absence of CTSC the protein does not accumulate. N-glycosylated.

It localises to the cytoplasmic granule lumen. The protein localises to the secreted. Its function is as follows. Serine protease that cleaves preferentially after Arg residues. Can also cleave after citrulline (deimidated arginine) and methylarginine residues. In Mus musculus (Mouse), this protein is Serine protease 57 (Prss57).